The chain runs to 211 residues: Octanoyltransferase (211 aa).

Positions 32 to 211 constitute a BPL/LPL catalytic domain; the sequence is DHEPEIIYLV…IQTEFNKIFK (180 aa). Residues 71–78, 145–147, and 158–160 contribute to the substrate site; these read RGGKFTFH, AIG, and GVA. Cys-176 acts as the Acyl-thioester intermediate in catalysis.

The protein belongs to the LipB family.

It localises to the cytoplasm. The enzyme catalyses octanoyl-[ACP] + L-lysyl-[protein] = N(6)-octanoyl-L-lysyl-[protein] + holo-[ACP] + H(+). It participates in protein modification; protein lipoylation via endogenous pathway; protein N(6)-(lipoyl)lysine from octanoyl-[acyl-carrier-protein]: step 1/2. Functionally, catalyzes the transfer of endogenously produced octanoic acid from octanoyl-acyl-carrier-protein onto the lipoyl domains of lipoate-dependent enzymes. Lipoyl-ACP can also act as a substrate although octanoyl-ACP is likely to be the physiological substrate. This is Octanoyltransferase from Rickettsia massiliae (strain Mtu5).